We begin with the raw amino-acid sequence, 139 residues long: Transcription antitermination protein NusB (139 aa).

This sequence belongs to the NusB family.

Involved in transcription antitermination. Required for transcription of ribosomal RNA (rRNA) genes. Binds specifically to the boxA antiterminator sequence of the ribosomal RNA (rrn) operons. The chain is Transcription antitermination protein NusB from Nitratiruptor sp. (strain SB155-2).